The sequence spans 81 residues: Short neurotoxin 2 (81 aa).

An N-terminal signal peptide occupies residues 1-21 (MKTLLLTLVVVTIVCLDLGYT). 4 cysteine pairs are disulfide-bonded: Cys-24/Cys-43, Cys-38/Cys-60, Cys-62/Cys-73, and Cys-74/Cys-79.

It belongs to the three-finger toxin family. Short-chain subfamily. Type I alpha-neurotoxin sub-subfamily. As to expression, expressed by the venom gland.

The protein localises to the secreted. Its function is as follows. Binds to muscle nicotinic acetylcholine receptor (nAChR) and inhibit acetylcholine from binding to the receptor, thereby impairing neuromuscular transmission. The sequence is that of Short neurotoxin 2 from Drysdalia coronoides (White-lipped snake).